The following is a 459-amino-acid chain: uncharacterized protein (459 aa).

In terms of domain architecture, TRAM spans 5–63 (PVEEGQKFPLTIRRMGINGEGIGYFKKAVVFVPGAITGEEVVVEAVKVRDRFTEAKLNK). Residues Cys-76, Cys-82, Cys-85, and Cys-166 each coordinate [4Fe-4S] cluster. The S-adenosyl-L-methionine site is built by Gln-290, Tyr-319, Asp-340, and Asp-388. The Nucleophile role is filled by Cys-415.

This sequence belongs to the class I-like SAM-binding methyltransferase superfamily. RNA M5U methyltransferase family.

This is an uncharacterized protein from Listeria monocytogenes serotype 4b (strain F2365).